The chain runs to 183 residues: Peptidyl-prolyl cis-trans isomerase H (183 aa).

The region spanning 19-182 is the PPIase cyclophilin-type domain; the sequence is FFDVALGGEP…QDVVIIQCGE (164 aa).

The protein belongs to the cyclophilin-type PPIase family. PPIase H subfamily.

The protein localises to the nucleus. The enzyme catalyses [protein]-peptidylproline (omega=180) = [protein]-peptidylproline (omega=0). In terms of biological role, PPIases accelerate the folding of proteins. It catalyzes the cis-trans isomerization of proline imidic peptide bonds in oligopeptides. This Emericella nidulans (strain FGSC A4 / ATCC 38163 / CBS 112.46 / NRRL 194 / M139) (Aspergillus nidulans) protein is Peptidyl-prolyl cis-trans isomerase H (cyp3).